We begin with the raw amino-acid sequence, 490 residues long: Ribulose bisphosphate carboxylase large chain (490 aa).

Substrate is bound by residues Asn127 and Thr177. Lys179 serves as the catalytic Proton acceptor. Lys181 contributes to the substrate binding site. Lys205, Asp207, and Glu208 together coordinate Mg(2+). Lys205 bears the N6-carboxylysine mark. The active-site Proton acceptor is the His297. Residues Arg298, His330, and Ser382 each coordinate substrate.

This sequence belongs to the RuBisCO large chain family. Type I subfamily. As to quaternary structure, heterohexadecamer of 8 large chains and 8 small chains. Mg(2+) is required as a cofactor.

It localises to the plastid. The protein resides in the chloroplast. The catalysed reaction is 2 (2R)-3-phosphoglycerate + 2 H(+) = D-ribulose 1,5-bisphosphate + CO2 + H2O. It catalyses the reaction D-ribulose 1,5-bisphosphate + O2 = 2-phosphoglycolate + (2R)-3-phosphoglycerate + 2 H(+). Its function is as follows. RuBisCO catalyzes two reactions: the carboxylation of D-ribulose 1,5-bisphosphate, the primary event in carbon dioxide fixation, as well as the oxidative fragmentation of the pentose substrate in the photorespiration process. Both reactions occur simultaneously and in competition at the same active site. This Cylindrotheca sp. (strain N1) (Marine diatom) protein is Ribulose bisphosphate carboxylase large chain.